Reading from the N-terminus, the 328-residue chain is Protein-glutamine deamidase Cif (328 aa).

The disordered stretch occupies residues 1 to 68 (MLEHGVMKIP…TNRTGENPMI (68 aa)). The segment covering 52 to 63 (RSSSISNTNRTG) has biased composition (polar residues). Catalysis depends on residues Cys-156, His-211, and Gln-231.

It belongs to the Cif family.

The protein localises to the secreted. It localises to the host nucleus. The catalysed reaction is L-glutaminyl-[protein] + H2O = L-glutamyl-[protein] + NH4(+). Its function is as follows. Protein-glutamine deamidase effector that inhibits the host cell cycle and other key cellular processes such as the actin network and programmed-cell death. Acts by mediating the side chain deamidation of 'Gln-40' of host NEDD8, converting it to glutamate, thereby abolishing the activity of cullin-RING-based E3 ubiquitin-protein ligase complexes (CRL complexes). Inactivation of CRL complexes prevents ubiquitination and subsequent degradation of the cyclin-dependent kinase inhibitors CDKN1A/p21 and CDKN1B/p27, leading to G1 and G2 cell cycle arrests in host cells. Deamidation of 'Gln-40' of host NEDD8 also triggers macrophage-specific programmed cell death. Also able to catalyze deamidation of 'Gln-40' of host ubiquitin in vitro; however, NEDD8 constitutes the preferred substrate in vivo. Also regulates the host NF-kappa-B signaling via activation of MAPK/ERK cascade: activation of host MAPK/ERK cascade is independent of CRL complexes inhibition, suggesting that Cif has other host protein targets than NEDD8. This Burkholderia pseudomallei (strain K96243) protein is Protein-glutamine deamidase Cif.